A 115-amino-acid polypeptide reads, in one-letter code: T cell receptor beta variable 2 (115 aa).

Positions 1–19 (MDTWLVCWAIFSLLKAGLT) are cleaved as a signal peptide. The region spanning 21–115 (PEVTQTPSHQ…SAMYFCASSE (95 aa)) is the Ig-like domain. Cys42 and Cys111 are joined by a disulfide. Asn93 carries an N-linked (GlcNAc...) asparagine glycan.

Alpha-beta TR is a heterodimer composed of an alpha and beta chain; disulfide-linked. The alpha-beta TR is associated with the transmembrane signaling CD3 coreceptor proteins to form the TR-CD3 (TcR or TCR). The assembly of alpha-beta TR heterodimers with CD3 occurs in the endoplasmic reticulum where a single alpha-beta TR heterodimer associates with one CD3D-CD3E heterodimer, one CD3G-CD3E heterodimer and one CD247 homodimer forming a stable octameric structure. CD3D-CD3E and CD3G-CD3E heterodimers preferentially associate with TR alpha and TR beta chains, respectively. The association of the CD247 homodimer is the last step of TcR assembly in the endoplasmic reticulum and is required for transport to the cell surface.

It is found in the cell membrane. Functionally, v region of the variable domain of T cell receptor (TR) beta chain that participates in the antigen recognition. Alpha-beta T cell receptors are antigen specific receptors which are essential to the immune response and are present on the cell surface of T lymphocytes. Recognize peptide-major histocompatibility (MH) (pMH) complexes that are displayed by antigen presenting cells (APC), a prerequisite for efficient T cell adaptive immunity against pathogens. Binding of alpha-beta TR to pMH complex initiates TR-CD3 clustering on the cell surface and intracellular activation of LCK that phosphorylates the ITAM motifs of CD3G, CD3D, CD3E and CD247 enabling the recruitment of ZAP70. In turn ZAP70 phosphorylates LAT, which recruits numerous signaling molecules to form the LAT signalosome. The LAT signalosome propagates signal branching to three major signaling pathways, the calcium, the mitogen-activated protein kinase (MAPK) kinase and the nuclear factor NF-kappa-B (NF-kB) pathways, leading to the mobilization of transcription factors that are critical for gene expression and essential for T cell growth and differentiation. The T cell repertoire is generated in the thymus, by V-(D)-J rearrangement. This repertoire is then shaped by intrathymic selection events to generate a peripheral T cell pool of self-MH restricted, non-autoaggressive T cells. Post-thymic interaction of alpha-beta TR with the pMH complexes shapes TR structural and functional avidity. This Homo sapiens (Human) protein is T cell receptor beta variable 2.